Reading from the N-terminus, the 150-residue chain is Flagellar assembly factor FliW (150 aa).

Belongs to the FliW family. As to quaternary structure, interacts with translational regulator CsrA and flagellin(s).

Its subcellular location is the cytoplasm. In terms of biological role, acts as an anti-CsrA protein, binds CsrA and prevents it from repressing translation of its target genes, one of which is flagellin. Binds to flagellin and participates in the assembly of the flagellum. This is Flagellar assembly factor FliW from Thermoanaerobacter pseudethanolicus (strain ATCC 33223 / 39E) (Clostridium thermohydrosulfuricum).